A 121-amino-acid chain; its full sequence is MSSPHVLVVDDTHVDRHVISMALMRHNVRVTAVESVMQALVFLDSEHDVNMIVSDYCMPEMTGYDLLMEVKKSPRLVHLPVIIASSDNIPERIRKCFDGGAKDYILKPVKIADVPRILNYI.

Residues 5–121 (HVLVVDDTHV…ADVPRILNYI (117 aa)) form the Response regulatory domain. Aspartate 55 bears the 4-aspartylphosphate mark.

Belongs to the ARR family. Type-A subfamily. Two-component system major event consists of a His-to-Asp phosphorelay between a sensor histidine kinase (HK) and a response regulator (RR). In plants, the His-to-Asp phosphorelay involves an additional intermediate named Histidine-containing phosphotransfer protein (HPt). This multistep phosphorelay consists of a His-Asp-His-Asp sequential transfer of a phosphate group between first a His and an Asp of the HK protein, followed by the transfer to a conserved His of the HPt protein and finally the transfer to an Asp in the receiver domain of the RR protein. As to expression, expressed in flowers and panicles.

In terms of biological role, functions as a response regulator involved in His-to-Asp phosphorelay signal transduction system. Phosphorylation of the Asp residue in the receiver domain activates the ability of the protein to promote the transcription of target genes. Type-A response regulators seem to act as negative regulators of the cytokinin signaling. This Oryza sativa subsp. japonica (Rice) protein is Two-component response regulator ORR13.